The chain runs to 340 residues: Anthranilate phosphoribosyltransferase (340 aa).

Residues glycine 78, 81-82, threonine 86, 88-91, 106-114, and serine 118 contribute to the 5-phospho-alpha-D-ribose 1-diphosphate site; these read GD, NIST, and KHGNRSVSS. Residue glycine 78 coordinates anthranilate. Serine 90 contributes to the Mg(2+) binding site. Position 109 (asparagine 109) interacts with anthranilate. Anthranilate is bound at residue arginine 164. 2 residues coordinate Mg(2+): aspartate 223 and glutamate 224.

The protein belongs to the anthranilate phosphoribosyltransferase family. Homodimer. Mg(2+) serves as cofactor.

It catalyses the reaction N-(5-phospho-beta-D-ribosyl)anthranilate + diphosphate = 5-phospho-alpha-D-ribose 1-diphosphate + anthranilate. It functions in the pathway amino-acid biosynthesis; L-tryptophan biosynthesis; L-tryptophan from chorismate: step 2/5. Its function is as follows. Catalyzes the transfer of the phosphoribosyl group of 5-phosphorylribose-1-pyrophosphate (PRPP) to anthranilate to yield N-(5'-phosphoribosyl)-anthranilate (PRA). The protein is Anthranilate phosphoribosyltransferase of Bacillus pumilus (strain SAFR-032).